A 383-amino-acid polypeptide reads, in one-letter code: Putative glutamate--cysteine ligase 2-2 (383 aa).

It belongs to the glutamate--cysteine ligase type 2 family. YbdK subfamily.

The enzyme catalyses L-cysteine + L-glutamate + ATP = gamma-L-glutamyl-L-cysteine + ADP + phosphate + H(+). Its function is as follows. ATP-dependent carboxylate-amine ligase which exhibits weak glutamate--cysteine ligase activity. The polypeptide is Putative glutamate--cysteine ligase 2-2 (Paenarthrobacter aurescens (strain TC1)).